A 378-amino-acid chain; its full sequence is L-lactate dehydrogenase (378 aa).

Residues 1 to 378 enclose the FMN hydroxy acid dehydrogenase domain; the sequence is MIISASTDYR…ELSRDSLVKR (378 aa). A substrate-binding site is contributed by Y24. FMN-binding residues include S106 and Q127. Substrate is bound at residue Y129. T155 contacts FMN. Residue R164 participates in substrate binding. FMN is bound at residue K251. H275 (proton acceptor) is an active-site residue. Residue R278 coordinates substrate. Position 306–330 (306–330) interacts with FMN; it reads DSGIRTGLDVVRMLALGADCTMLGR.

It belongs to the FMN-dependent alpha-hydroxy acid dehydrogenase family. FMN is required as a cofactor.

The protein resides in the cell inner membrane. It catalyses the reaction (S)-lactate + A = pyruvate + AH2. Its function is as follows. Catalyzes the conversion of L-lactate to pyruvate. Is coupled to the respiratory chain. This Vibrio cholerae serotype O1 (strain ATCC 39315 / El Tor Inaba N16961) protein is L-lactate dehydrogenase.